A 525-amino-acid polypeptide reads, in one-letter code: Cyclic AMP-responsive element-binding protein 3-like protein 2 (525 aa).

The Cytoplasmic segment spans residues 1–382 (MEIMESGDPV…SCKAAGTQTG (382 aa)). Disordered regions lie at residues 85–104 (LCGDSRPQSPFTHASSDDNF), 203–267 (EALQ…QGSG), and 309–338 (NKISAQESRRKKKEYMDSLEKRVENSSSEN). Composition is skewed to polar residues over residues 90–102 (RPQSPFTHASSDD) and 213–239 (SSHGSDSEGGQSPTRSLPPSSPVQSQA). The bZIP domain maps to 299–362 (ALKKIRRKIK…RTLLQQLQRL (64 aa)). The segment at 301 to 330 (KKIRRKIKNKISAQESRRKKKEYMDSLEKR) is basic motif. The segment covering 322-332 (EYMDSLEKRVE) has biased composition (basic and acidic residues). The leucine-zipper stretch occupies residues 341–362 (LRKKVEVLESTNRTLLQQLQRL). A helical; Signal-anchor for type II membrane protein transmembrane segment spans residues 383–403 (TCLMMVVLCFAVIFGSFTQNL). At 404-525 (DMYSSSSKTI…ELDRTVNTTS (122 aa)) the chain is on the lumenal side. Positions 433–436 (RKLL) match the S1P recognition motif. Asparagine 490, asparagine 509, and asparagine 522 each carry an N-linked (GlcNAc...) asparagine glycan.

This sequence belongs to the bZIP family. ATF subfamily. Binds DNA as a dimer. In terms of processing, upon ER stress, translocated to the Golgi apparatus, where it is processed by regulated intramembrane proteolysis (RIP) to release the cytosol-facing N-terminal transcription factor domain. The cleavage is performed sequentially by site-1 and site-2 proteases (S1P/mbtps1 and S2P/mbtps2).

It is found in the endoplasmic reticulum membrane. It localises to the nucleus. In terms of biological role, transcription factor involved in unfolded protein response (UPR). In the absence of endoplasmic reticulum (ER) stress, inserted into ER membranes, with N-terminal DNA-binding and transcription activation domains oriented toward the cytosolic face of the membrane. In response to ER stress, transported to the Golgi, where it is cleaved in a site-specific manner by resident proteases S1P/mbtps1 and S2P/mbtps2. The released N-terminal cytosolic domain is translocated to the nucleus to effect transcription of specific target genes. Plays a critical role in chondrogenesis. May protect neuroblastoma cells from ER stress-induced death. In vitro activates transcription of target genes via direct binding to the CRE site. This is Cyclic AMP-responsive element-binding protein 3-like protein 2 (creb3l2) from Xenopus laevis (African clawed frog).